Reading from the N-terminus, the 284-residue chain is Ubiquitin thioesterase otubain-like (284 aa).

The OTU domain occupies 77–274 (GEIRYIRGDG…PGHYDVIYKK (198 aa)). The active site involves aspartate 85. The active-site Nucleophile is cysteine 88. Position 176 (isoleucine 176) interacts with substrate. Catalysis depends on residues histidine 245 and histidine 267.

It belongs to the peptidase C65 family.

It carries out the reaction Thiol-dependent hydrolysis of ester, thioester, amide, peptide and isopeptide bonds formed by the C-terminal Gly of ubiquitin (a 76-residue protein attached to proteins as an intracellular targeting signal).. Hydrolase that can remove conjugated ubiquitin from proteins and plays an important regulatory role at the level of protein turnover by preventing degradation. Specifically cleaves 'Lys-48'-linked polyubiquitin. This chain is Ubiquitin thioesterase otubain-like (otub-1), found in Caenorhabditis elegans.